The following is a 95-amino-acid chain: Integration host factor subunit beta (95 aa).

Belongs to the bacterial histone-like protein family. In terms of assembly, heterodimer of an alpha and a beta chain.

Functionally, this protein is one of the two subunits of integration host factor, a specific DNA-binding protein that functions in genetic recombination as well as in transcriptional and translational control. The sequence is that of Integration host factor subunit beta from Klebsiella pneumoniae (strain 342).